The primary structure comprises 969 residues: Translation initiation factor IF-2 (969 aa).

Residues 49–63 show a composition bias toward basic and acidic residues; it reads HLRKSHGATDGDKRK. 3 disordered regions span residues 49–85, 100–128, and 143–380; these read HLRK…KART, DDVS…REEE, and LRER…SFQA. Residues 105 to 114 show a composition bias toward low complexity; that stretch reads VAEQGQAQVA. Residues 143 to 181 are compositionally biased toward basic and acidic residues; it reads LRERQERLEREEAERRAREEAAEAERRRAEEEAAAKRAA. Low complexity predominate over residues 182-206; sequence AEAAAAQQAAQQAAAAQQAAAPADS. The segment covering 209–260 has biased composition (basic and acidic residues); that stretch reads DEARAAAERAAQREAAKKAEDAAREAAEKARAEQEEIRKRREAAEAEARAIR. Residues 301–323 show a composition bias toward low complexity; it reads AQARPAAKKPAAAPAATPAPAGA. Positions 353–366 are enriched in gly residues; that stretch reads SSGGVDRGWRGGPK. The 170-residue stretch at 469–638 folds into the tr-type G domain; the sequence is PRPPVVTVMG…LLQAEVLELK (170 aa). The tract at residues 478–485 is G1; the sequence is GHVDHGKT. 478-485 serves as a coordination point for GTP; the sequence is GHVDHGKT. The segment at 503–507 is G2; that stretch reads GITQH. The G3 stretch occupies residues 524 to 527; it reads DTPG. Residues 524–528 and 578–581 contribute to the GTP site; these read DTPGH and NKID. The G4 stretch occupies residues 578–581; sequence NKID. The G5 stretch occupies residues 614–616; that stretch reads SAK.

Belongs to the TRAFAC class translation factor GTPase superfamily. Classic translation factor GTPase family. IF-2 subfamily.

The protein localises to the cytoplasm. Its function is as follows. One of the essential components for the initiation of protein synthesis. Protects formylmethionyl-tRNA from spontaneous hydrolysis and promotes its binding to the 30S ribosomal subunits. Also involved in the hydrolysis of GTP during the formation of the 70S ribosomal complex. In Burkholderia multivorans (strain ATCC 17616 / 249), this protein is Translation initiation factor IF-2.